We begin with the raw amino-acid sequence, 184 residues long: Photosystem I assembly protein Ycf4 (184 aa).

A run of 2 helical transmembrane segments spans residues 19-39 (ISNF…LLVG) and 57-77 (IVFF…LFIS).

Belongs to the Ycf4 family.

The protein localises to the plastid. It localises to the chloroplast thylakoid membrane. Functionally, seems to be required for the assembly of the photosystem I complex. The protein is Photosystem I assembly protein Ycf4 of Nymphaea alba (White water-lily).